Here is a 405-residue protein sequence, read N- to C-terminus: uncharacterized protein (405 aa).

Transmembrane regions (helical) follow at residues 19-39 (IVSI…PLAV), 47-67 (VMGF…FATL), 85-105 (IVVF…TAGL), 107-127 (ASLP…LGIG), 156-176 (GIVT…FYHW), 178-198 (GLQA…LLAI), 224-244 (GMAL…ITLF), 252-272 (GAAF…LLFP), 283-303 (VAMI…VATM), 309-329 (IGVL…GVVA), 344-364 (TYTV…GLVM), and 366-386 (WAGV…ALLL).

This sequence belongs to the major facilitator superfamily. YhhS family.

Its subcellular location is the cell inner membrane. This is an uncharacterized protein from Escherichia coli O6:H1 (strain CFT073 / ATCC 700928 / UPEC).